A 114-amino-acid chain; its full sequence is MDPFSQLSQLQHNLQAMTKTVAGLENDMLEVLKENTELKVENQLLREKISKLDANKEPAENKSQAGLKSLRNIYDSGYHICNMYYGSHRESGEDCMFCLDILDNFVNHGQKSRG.

4 residues coordinate Zn(2+): H79, C81, C95, and C98.

Belongs to the YabA family. Homotetramer. Interacts with both DnaA and DnaN, acting as a bridge between these two proteins. Zn(2+) serves as cofactor.

It localises to the cytoplasm. It is found in the nucleoid. Involved in control of chromosome replication initiation. Inhibits the cooperative binding of DnaA to the oriC region, thus negatively regulating initiation of chromosome replication. Inhibits the ability of DnaA-ATP to form a helix on DNA; does not disassemble preformed DnaA-DNA helices. Decreases the residence time of DnaA on the chromosome at its binding sites (oriC, replication forks and promoter-binding sites). Tethers DnaA to the replication machinery via the DNA polymerase beta sliding clamp subunit (dnaN). Associates with oriC and other DnaA targets on the chromosome in a DnaA-dependent manner. The polypeptide is Replication initiation control protein YabA (Lactobacillus johnsonii (strain CNCM I-12250 / La1 / NCC 533)).